Consider the following 192-residue polypeptide: Iron sulfur cluster assembly protein 1, mitochondrial (192 aa).

Residues Met1 to Met53 constitute a mitochondrion transit peptide.

It belongs to the NifU family. In terms of assembly, homodimer. Component of the core Fe-S cluster (ISC) assembly machinery. Requires [2Fe-2S] cluster as cofactor.

Its subcellular location is the mitochondrion. It localises to the mitochondrion matrix. It participates in cofactor biosynthesis; iron-sulfur cluster biosynthesis. Functionally, scaffold protein for the de novo synthesis of iron-sulfur (Fe-S) clusters within mitochondria, which is required for maturation of both mitochondrial and cytoplasmic [2Fe-2S] and [4Fe-4S] proteins. First, a [2Fe-2S] cluster is transiently assembled on the scaffold protein isu1. In a second step, the cluster is released from isu1, transferred to a glutaredoxin, followed by the formation of mitochondrial [2Fe-2S] proteins, the synthesis of [4Fe-4S] clusters and their target-specific insertion into the recipient apoproteins. Cluster assembly on isu1 depends on the function of the cysteine desulfurase complex nfs1-isd11, which serves as the sulfur donor for cluster synthesis, the iron-binding protein frataxin as the putative iron donor, and the electron transfer chain comprised of ferredoxin reductase and ferredoxin, which receive their electrons from NADH. The chain is Iron sulfur cluster assembly protein 1, mitochondrial (isu1) from Schizosaccharomyces pombe (strain 972 / ATCC 24843) (Fission yeast).